A 1004-amino-acid chain; its full sequence is 2-oxoglutarate dehydrogenase E1 component (1004 aa).

The protein belongs to the alpha-ketoglutarate dehydrogenase family. As to quaternary structure, homodimer. Part of the 2-oxoglutarate dehydrogenase (OGDH) complex composed of E1 (2-oxoglutarate dehydrogenase), E2 (dihydrolipoamide succinyltransferase) and E3 (dihydrolipoamide dehydrogenase); the complex contains multiple copies of the three enzymatic components (E1, E2 and E3). The cofactor is thiamine diphosphate.

It catalyses the reaction N(6)-[(R)-lipoyl]-L-lysyl-[protein] + 2-oxoglutarate + H(+) = N(6)-[(R)-S(8)-succinyldihydrolipoyl]-L-lysyl-[protein] + CO2. In terms of biological role, E1 component of the 2-oxoglutarate dehydrogenase (OGDH) complex which catalyzes the decarboxylation of 2-oxoglutarate, the first step in the conversion of 2-oxoglutarate to succinyl-CoA and CO(2). This Brucella abortus (strain S19) protein is 2-oxoglutarate dehydrogenase E1 component.